Consider the following 87-residue polypeptide: Small ribosomal subunit protein bS20 (87 aa).

It belongs to the bacterial ribosomal protein bS20 family.

Its function is as follows. Binds directly to 16S ribosomal RNA. In Geobacter sulfurreducens (strain ATCC 51573 / DSM 12127 / PCA), this protein is Small ribosomal subunit protein bS20.